The sequence spans 197 residues: Guanylate kinase (197 aa).

One can recognise a Guanylate kinase-like domain in the interval G9–S188. Position 16–23 (A16–S23) interacts with ATP.

Belongs to the guanylate kinase family.

It localises to the cytoplasm. The catalysed reaction is GMP + ATP = GDP + ADP. Functionally, essential for recycling GMP and indirectly, cGMP. The sequence is that of Guanylate kinase from Chlorobium luteolum (strain DSM 273 / BCRC 81028 / 2530) (Pelodictyon luteolum).